The chain runs to 267 residues: Strigolactone esterase D14 (267 aa).

Ser-97 serves as the catalytic Nucleophile. Active-site residues include Asp-218 and His-247.

The protein belongs to the AB hydrolase superfamily. As to quaternary structure, interacts with SMXL6, SMXL7 and SMXL8. The interaction with SMXLs occurs in the presence of (2'R) stereoisomers of strigolactones, but not (2'S) stereoisomers. Interacts with MAX2. Forms a complex with MAX2 and SKP1A/ASK1 in presence of strigolactone. Expressed at high levels in rosette and cauline leaves and at lower levels in axillary buds, inflorescences, stems, roots and developing vascular tissue of cotyledons.

The protein resides in the cytoplasm. Its subcellular location is the nucleus. Its function is as follows. Involved in strigolactone signaling pathway. Does not move long distances acropetally in the plant to regulate shoot branching and is rapidly degraded in the presence of strigolactones. Functions downstream of strigolactone synthesis, as a component of hormone signaling and as an enzyme that participates in the conversion of strigolactones to the bioactive form. Acts probably as a strigolactone receptor. Strigolactones are hormones that inhibit tillering and shoot branching through the MAX-dependent pathway, contribute to the regulation of shoot architectural response to phosphate-limiting conditions and function as rhizosphere signal that stimulates hyphal branching of arbuscular mycorrhizal fungi and trigger seed germination of root parasitic weeds. Hydrolyzes methyl carlactonoate (MeCLA), but not carlactone (CL) or carlactonoic acid (CLA). Hydrolyzes the butenolide ring of strigolactones. The initial nucleophilic attack causes an electron shift, followed by the addition of a water molecule, to lead to the release of the ABC ring product and the formation of a 'Ser-97'-stabilized open lactone intermediate. Has no esterase activity for 4-nitrophenyl butyrate. Binds and hydrolyzes the synthetic strigolactone analog GR24 in vitro. Forms a stable covalent complex with the D-ring of strigolactone, which is essential for hormone bioactivity. The D-ring is attached to His-247 of the catalytic triad. The hydrolysis of strigolactone into a covalently linked intermediate molecule initiates a conformational change of D14 to facilitate interaction with MAX2 and formation of the D14-MAX2-SKP1/ASK1 complex to trigger strigolactone signaling. This mechanism defines D14 as a non-canonical hormone receptor with dual functions to generate and sense the active form of strigolactone. The chain is Strigolactone esterase D14 from Arabidopsis thaliana (Mouse-ear cress).